A 160-amino-acid chain; its full sequence is Phosphopantetheine adenylyltransferase (160 aa).

S10 is a binding site for substrate. ATP contacts are provided by residues 10 to 11 and H18; that span reads SF. Substrate contacts are provided by K42, L74, and R88. ATP contacts are provided by residues 89–91, E99, and 124–130; these read GLR and YSFLSSS.

It belongs to the bacterial CoaD family. As to quaternary structure, homohexamer. Requires Mg(2+) as cofactor.

It is found in the cytoplasm. The enzyme catalyses (R)-4'-phosphopantetheine + ATP + H(+) = 3'-dephospho-CoA + diphosphate. It functions in the pathway cofactor biosynthesis; coenzyme A biosynthesis; CoA from (R)-pantothenate: step 4/5. Reversibly transfers an adenylyl group from ATP to 4'-phosphopantetheine, yielding dephospho-CoA (dPCoA) and pyrophosphate. This is Phosphopantetheine adenylyltransferase from Bacillus pumilus (strain SAFR-032).